The sequence spans 499 residues: E3 ubiquitin-protein ligase TRIM69 (499 aa).

The segment at 1 to 152 (MEVSSRPPSN…SMGQSKDFLQ (152 aa)) is necessary for nuclear localization. The RING-type zinc-finger motif lies at 41–82 (CPLCNDWFRDPLMLTCGHNFCQACIQNYWKMQAKETFCPECK). Positions 160 to 265 (FTEELAIYQS…NIQARMEQQN (106 aa)) form a coiled coil. The region spanning 305 to 499 (PIQYTIWREM…KEPLHIVHPQ (195 aa)) is the B30.2/SPRY domain. Residue Ser-341 is modified to Phosphoserine.

It belongs to the TRIM/RBCC family. Homo-multimer; required for antiviral activity. Interacts with PML. Post-translationally, phosphorylated. Phosphorylation is necessary for nuclear localization.

It is found in the cytoplasm. The protein localises to the nucleus. Its subcellular location is the nucleus speckle. It localises to the cytoskeleton. The protein resides in the microtubule organizing center. It is found in the centrosome. The enzyme catalyses S-ubiquitinyl-[E2 ubiquitin-conjugating enzyme]-L-cysteine + [acceptor protein]-L-lysine = [E2 ubiquitin-conjugating enzyme]-L-cysteine + N(6)-ubiquitinyl-[acceptor protein]-L-lysine.. The protein operates within protein modification; protein ubiquitination. E3 ubiquitin ligase that plays an important role in antiviral immunity by restricting different viral infections including dengue virus or vesicular stomatitis indiana virus. Ubiquitinates viral proteins such as dengue virus NS3 thereby limiting infection. In addition, acts as a key mediator of type I interferon induced microtubule stabilization by directly associating to microtubules independently of its E3 ligase activity. Also plays a role in cataract formation together with TP53. Mechanistically, inhibits UVB-induced cell apoptosis and reactive oxygen species (ROS) production by inducing TP53 ubiquitination. Regulates centrosome dynamics and mitotic progression by ubiquitinating STK3/MST2; leading to its redistribution to the perinuclear cytoskeleton and subsequent phosphorylation by PLK1. In Rattus norvegicus (Rat), this protein is E3 ubiquitin-protein ligase TRIM69 (Trim69).